Here is a 67-residue protein sequence, read N- to C-terminus: Prokaryotic ubiquitin-like protein Pup (67 aa).

Residues methionine 1–alanine 36 form a disordered region. Residues threonine 23–phenylalanine 61 form an ARC ATPase binding region. Residue glutamate 67 forms an Isoglutamyl lysine isopeptide (Glu-Lys) (interchain with K-? in acceptor proteins) linkage.

Belongs to the prokaryotic ubiquitin-like protein family. Strongly interacts with the proteasome-associated ATPase ARC through a hydrophobic interface; the interacting region of Pup lies in its C-terminal half. There is one Pup binding site per ARC hexamer ring.

It participates in protein degradation; proteasomal Pup-dependent pathway. Functionally, protein modifier that is covalently attached to lysine residues of substrate proteins, thereby targeting them for proteasomal degradation. The tagging system is termed pupylation. This is Prokaryotic ubiquitin-like protein Pup from Bifidobacterium longum (strain DJO10A).